The following is a 97-amino-acid chain: uncharacterized protein (97 aa).

The tract at residues 58 to 97 (SLLLPRTVQTGGTEREKPGPGQRKRGAHCSACKRSSTRPS) is disordered.

This is an uncharacterized protein from Homo sapiens (Human).